A 142-amino-acid chain; its full sequence is Crustacean hyperglycemic hormones (142 aa).

The signal sequence occupies residues 1–26 (MYSKTIPAMLAIITVAYLCALPHAHA). Pyrrolidone carboxylic acid; partial is present on Q67. 3 cysteine pairs are disulfide-bonded: C73-C109, C89-C105, and C92-C118. V138 bears the Valine amide mark.

The protein belongs to the arthropod CHH/MIH/GIH/VIH hormone family. The N-terminus is blocked only in isoform CHH-II but not in isoform CHH-I. In terms of tissue distribution, produced by the medulla terminalis X-organ in the eyestalks and transported to the sinus gland where they are stored and released.

It localises to the secreted. Its function is as follows. Hormone found in the sinus gland of isopods and decapods which controls the blood sugar level. Has a secretagogue action over the amylase released from the midgut gland. May act as a stress hormone and may be involved in the control of molting and reproduction. This Carcinus maenas (Common shore crab) protein is Crustacean hyperglycemic hormones.